The sequence spans 311 residues: Methionyl-tRNA formyltransferase (311 aa).

Residue 110 to 113 (SLLP) coordinates (6S)-5,6,7,8-tetrahydrofolate.

The protein belongs to the Fmt family.

It carries out the reaction L-methionyl-tRNA(fMet) + (6R)-10-formyltetrahydrofolate = N-formyl-L-methionyl-tRNA(fMet) + (6S)-5,6,7,8-tetrahydrofolate + H(+). Functionally, attaches a formyl group to the free amino group of methionyl-tRNA(fMet). The formyl group appears to play a dual role in the initiator identity of N-formylmethionyl-tRNA by promoting its recognition by IF2 and preventing the misappropriation of this tRNA by the elongation apparatus. This chain is Methionyl-tRNA formyltransferase, found in Sulfurihydrogenibium sp. (strain YO3AOP1).